The following is a 154-amino-acid chain: Interleukin-2 (154 aa).

The N-terminal stretch at 1–20 (MYRMQLLSCIALSLALVTNS) is a signal peptide. Threonine 23 is a glycosylation site (O-linked (GalNAc...) threonine). The cysteines at positions 78 and 126 are disulfide-linked.

This sequence belongs to the IL-2 family.

The protein resides in the secreted. Functionally, cytokine produced by activated CD4-positive helper T-cells and to a lesser extend activated CD8-positive T-cells and natural killer (NK) cells that plays pivotal roles in the immune response and tolerance. Binds to a receptor complex composed of either the high-affinity trimeric IL-2R (IL2RA/CD25, IL2RB/CD122 and IL2RG/CD132) or the low-affinity dimeric IL-2R (IL2RB and IL2RG). Interaction with the receptor leads to oligomerization and conformation changes in the IL-2R subunits resulting in downstream signaling starting with phosphorylation of JAK1 and JAK3. In turn, JAK1 and JAK3 phosphorylate the receptor to form a docking site leading to the phosphorylation of several substrates including STAT5. This process leads to activation of several pathways including STAT, phosphoinositide-3-kinase/PI3K and mitogen-activated protein kinase/MAPK pathways. Functions as a T-cell growth factor and can increase NK-cell cytolytic activity as well. Promotes strong proliferation of activated B-cells and subsequently immunoglobulin production. Plays a pivotal role in regulating the adaptive immune system by controlling the survival and proliferation of regulatory T-cells, which are required for the maintenance of immune tolerance. Moreover, participates in the differentiation and homeostasis of effector T-cell subsets, including Th1, Th2, Th17 as well as memory CD8-positive T-cells. The polypeptide is Interleukin-2 (IL2) (Macaca fascicularis (Crab-eating macaque)).